Consider the following 306-residue polypeptide: S-methyl-5'-thioadenosine phosphorylase (306 aa).

Residues threonine 21, 63–64 (RH), and 96–97 (SA) contribute to the phosphate site. Methionine 198 lines the substrate pocket. Serine 199 is a binding site for phosphate. A substrate-binding site is contributed by 222–224 (DYD).

Belongs to the PNP/MTAP phosphorylase family. MTAP subfamily. As to quaternary structure, homotrimer.

It is found in the cytoplasm. It localises to the nucleus. The enzyme catalyses S-methyl-5'-thioadenosine + phosphate = 5-(methylsulfanyl)-alpha-D-ribose 1-phosphate + adenine. The protein operates within amino-acid biosynthesis; L-methionine biosynthesis via salvage pathway; S-methyl-5-thio-alpha-D-ribose 1-phosphate from S-methyl-5'-thioadenosine (phosphorylase route): step 1/1. Functionally, catalyzes the reversible phosphorylation of S-methyl-5'-thioadenosine (MTA) to adenine and 5-methylthioribose-1-phosphate. Involved in the breakdown of MTA, a major by-product of polyamine biosynthesis. Responsible for the first step in the methionine salvage pathway after MTA has been generated from S-adenosylmethionine. Has broad substrate specificity with 6-aminopurine nucleosides as preferred substrates. The chain is S-methyl-5'-thioadenosine phosphorylase from Sclerotinia sclerotiorum (strain ATCC 18683 / 1980 / Ss-1) (White mold).